The primary structure comprises 321 residues: Probable pectate lyase A (321 aa).

The N-terminal stretch at 1–18 (MKFVATLIACGLSGLALA) is a signal peptide. Residue N93 is glycosylated (N-linked (GlcNAc...) asparagine). The Ca(2+) site is built by D134, D163, and D167. R220 is a catalytic residue. N238 carries an N-linked (GlcNAc...) asparagine glycan.

This sequence belongs to the polysaccharide lyase 1 family. Requires Ca(2+) as cofactor.

It localises to the secreted. It catalyses the reaction Eliminative cleavage of (1-&gt;4)-alpha-D-galacturonan to give oligosaccharides with 4-deoxy-alpha-D-galact-4-enuronosyl groups at their non-reducing ends.. Functionally, pectinolytic enzyme consist of four classes of enzymes: pectin lyase, polygalacturonase, pectin methylesterase and rhamnogalacturonase. Among pectinolytic enzymes, pectin lyase is the most important in depolymerization of pectin, since it cleaves internal glycosidic bonds of highly methylated pectins. Favors pectate, the anion, over pectin, the methyl ester. The chain is Probable pectate lyase A (plyA) from Aspergillus fumigatus (strain ATCC MYA-4609 / CBS 101355 / FGSC A1100 / Af293) (Neosartorya fumigata).